Here is a 245-residue protein sequence, read N- to C-terminus: tRNA pseudouridine synthase A (245 aa).

The active-site Nucleophile is Asp52. Position 110 (Tyr110) interacts with substrate.

Belongs to the tRNA pseudouridine synthase TruA family. As to quaternary structure, homodimer.

The enzyme catalyses uridine(38/39/40) in tRNA = pseudouridine(38/39/40) in tRNA. Formation of pseudouridine at positions 38, 39 and 40 in the anticodon stem and loop of transfer RNAs. The chain is tRNA pseudouridine synthase A from Ruminiclostridium cellulolyticum (strain ATCC 35319 / DSM 5812 / JCM 6584 / H10) (Clostridium cellulolyticum).